Here is a 523-residue protein sequence, read N- to C-terminus: Putative glucosylceramidase 1 (523 aa).

Residues 1–23 form the signal peptide; the sequence is MKSRFLLKIFIFLAVFGVDSVRA. N-linked (GlcNAc...) asparagine glycosylation is present at Asn168. The Nucleophile role is filled by Glu358.

This sequence belongs to the glycosyl hydrolase 30 family.

It catalyses the reaction a beta-D-glucosylceramide + H2O = an N-acyl-sphingoid base + D-glucose. The enzyme catalyses a beta-D-glucosyl-(1&lt;-&gt;1')-N-acylsphing-4-enine + H2O = an N-acylsphing-4-enine + D-glucose. The catalysed reaction is an N-acyl-1-beta-D-glucosyl-15-methylhexadecasphing-4-enine + H2O = an N-acyl-15-methylhexadecasphing-4-enine + D-glucose. It participates in lipid metabolism; sphingolipid metabolism. In terms of biological role, glucosylceramidase that catalyzes the hydrolysis of glucosylceramides into free ceramides and glucose. C.elegans contains specific sphingoid bases, which are unique or different in structure compared to the sphingoid bases found in other animals. Two examples of these distinctive compounds are: 15-methylhexadecasphinganine and 15-methylhexadecasphing-4-enine. The protein is Putative glucosylceramidase 1 (gba-1) of Caenorhabditis elegans.